We begin with the raw amino-acid sequence, 2017 residues long: Rootletin (2017 aa).

Coiled coils occupy residues 70-262 and 318-444; these read ATEM…KVTN and ERDL…LETE. Polar residues predominate over residues 464–483; the sequence is SESGVQLSGSERTADASNGS. The disordered stretch occupies residues 464–518; sequence SESGVQLSGSERTADASNGSLRGLSGQRTPSPPRRSSPGRGRSPRRGPSPACSDS. A compositionally biased stretch (low complexity) spans 499 to 513; it reads SSPGRGRSPRRGPSP. 2 coiled-coil regions span residues 546-1058 and 1091-1438; these read QDLL…LAES and EMER…GLRS. Disordered stretches follow at residues 1184–1226 and 1443–1575; these read LRES…RSAV and GLGL…GRLS. Residues serine 1460, serine 1470, serine 1476, serine 1483, serine 1486, serine 1490, and serine 1496 each carry the phosphoserine modification. A coiled-coil region spans residues 1505–1704; it reads EAVRGALREF…DSEVKAGTLQ (200 aa). Basic and acidic residues predominate over residues 1510-1529; the sequence is ALREFLQELRSAQRERDELR. Residues serine 1575 and serine 1660 each carry the phosphoserine modification. Residues 1962 to 2017 form a disordered region; sequence RSAQAQTERTLEARERAHRQRVRGLEEQVSTLKGQLQQELRRSSAPFSPPSGPPEK. Residues 1989–1999 are compositionally biased toward polar residues; the sequence is QVSTLKGQLQQ. Residues 2008–2017 are compositionally biased toward pro residues; that stretch reads FSPPSGPPEK.

This sequence belongs to the rootletin family. In terms of assembly, homomer. Interacts with KLC3, NEK2 and the N-terminus of CEP250. Interacts with CEP44. Interacts with CCDC102B (via N-terminus). Post-translationally, phosphorylated by NEK2 which may regulate its association with centrosomes.

Its subcellular location is the cytoplasm. The protein localises to the cytoskeleton. The protein resides in the microtubule organizing center. It localises to the centrosome. It is found in the centriole. Its subcellular location is the cilium basal body. In terms of biological role, major structural component of the ciliary rootlet, a cytoskeletal-like structure in ciliated cells which originates from the basal body at the proximal end of a cilium and extends proximally toward the cell nucleus. Furthermore, is required for the correct positioning of the cilium basal body relative to the cell nucleus, to allow for ciliogenesis. Contributes to centrosome cohesion before mitosis. This chain is Rootletin, found in Homo sapiens (Human).